The chain runs to 138 residues: Transcription antitermination protein NusB (138 aa).

The protein belongs to the NusB family.

Its function is as follows. Involved in transcription antitermination. Required for transcription of ribosomal RNA (rRNA) genes. Binds specifically to the boxA antiterminator sequence of the ribosomal RNA (rrn) operons. This chain is Transcription antitermination protein NusB, found in Serratia proteamaculans (strain 568).